The sequence spans 120 residues: MFITSLKNQKEFELINKLGKKFHEKYFILVIAKNIPKIFLESKYNIFLGIKVSKKLNKKAVVRNKIKRRIKHLIRLICNNSNLKKLAMIIIPRKGFDTADFSVLNHELSKAILDFYNPKK.

The protein belongs to the RnpA family. As to quaternary structure, consists of a catalytic RNA component (M1 or rnpB) and a protein subunit.

The catalysed reaction is Endonucleolytic cleavage of RNA, removing 5'-extranucleotides from tRNA precursor.. RNaseP catalyzes the removal of the 5'-leader sequence from pre-tRNA to produce the mature 5'-terminus. It can also cleave other RNA substrates such as 4.5S RNA. The protein component plays an auxiliary but essential role in vivo by binding to the 5'-leader sequence and broadening the substrate specificity of the ribozyme. This Rickettsia bellii (strain RML369-C) protein is Ribonuclease P protein component.